The following is a 375-amino-acid chain: Serpin B5 (375 aa).

N-linked (GlcNAc...) asparagine glycans are attached at residues Asn-99, Asn-133, Asn-188, Asn-298, and Asn-361.

This sequence belongs to the serpin family. Ov-serpin subfamily. As to quaternary structure, interacts with IRF6.

It localises to the secreted. It is found in the extracellular space. Its function is as follows. Tumor suppressor. It blocks the growth, invasion, and metastatic properties of mammary tumors. As it does not undergo the S (stressed) to R (relaxed) conformational transition characteristic of active serpins, it exhibits no serine protease inhibitory activity. The sequence is that of Serpin B5 (Serpinb5) from Rattus norvegicus (Rat).